We begin with the raw amino-acid sequence, 1241 residues long: ATP-dependent helicase/nuclease subunit A (1241 aa).

Residues 12 to 485 (SQWTDDQWKA…IDLAKNFRSR (474 aa)) enclose the UvrD-like helicase ATP-binding domain. 33-40 (AAAGSGKT) serves as a coordination point for ATP. The region spanning 505–805 (GEIDYDADAE…RIMTIHKSKG (301 aa)) is the UvrD-like helicase C-terminal domain.

The protein belongs to the helicase family. AddA subfamily. In terms of assembly, heterodimer of AddA and AddB/RexB. It depends on Mg(2+) as a cofactor.

The catalysed reaction is Couples ATP hydrolysis with the unwinding of duplex DNA by translocating in the 3'-5' direction.. It catalyses the reaction ATP + H2O = ADP + phosphate + H(+). Its function is as follows. The heterodimer acts as both an ATP-dependent DNA helicase and an ATP-dependent, dual-direction single-stranded exonuclease. Recognizes the chi site generating a DNA molecule suitable for the initiation of homologous recombination. The AddA nuclease domain is required for chi fragment generation; this subunit has the helicase and 3' -&gt; 5' nuclease activities. This is ATP-dependent helicase/nuclease subunit A from Bacillus cereus (strain AH187).